Reading from the N-terminus, the 398-residue chain is Glutamyl-tRNA reductase (398 aa).

Substrate is bound by residues 45–48, Ser88, 93–95, and Gln99; these read TCNR and EDQ. Catalysis depends on Cys46, which acts as the Nucleophile. 168-173 is an NADP(+) binding site; the sequence is GAGKMG.

Belongs to the glutamyl-tRNA reductase family. In terms of assembly, homodimer.

The enzyme catalyses (S)-4-amino-5-oxopentanoate + tRNA(Glu) + NADP(+) = L-glutamyl-tRNA(Glu) + NADPH + H(+). It participates in porphyrin-containing compound metabolism; protoporphyrin-IX biosynthesis; 5-aminolevulinate from L-glutamyl-tRNA(Glu): step 1/2. Its function is as follows. Catalyzes the NADPH-dependent reduction of glutamyl-tRNA(Glu) to glutamate 1-semialdehyde (GSA). In Methanothermobacter marburgensis (strain ATCC BAA-927 / DSM 2133 / JCM 14651 / NBRC 100331 / OCM 82 / Marburg) (Methanobacterium thermoautotrophicum), this protein is Glutamyl-tRNA reductase (hemA).